Here is a 145-residue protein sequence, read N- to C-terminus: D-aminoacyl-tRNA deacylase (145 aa).

Positions 137 to 138 (GP) match the Gly-cisPro motif, important for rejection of L-amino acids motif.

Belongs to the DTD family. As to quaternary structure, homodimer.

The protein resides in the cytoplasm. It carries out the reaction glycyl-tRNA(Ala) + H2O = tRNA(Ala) + glycine + H(+). It catalyses the reaction a D-aminoacyl-tRNA + H2O = a tRNA + a D-alpha-amino acid + H(+). Functionally, an aminoacyl-tRNA editing enzyme that deacylates mischarged D-aminoacyl-tRNAs. Also deacylates mischarged glycyl-tRNA(Ala), protecting cells against glycine mischarging by AlaRS. Acts via tRNA-based rather than protein-based catalysis; rejects L-amino acids rather than detecting D-amino acids in the active site. By recycling D-aminoacyl-tRNA to D-amino acids and free tRNA molecules, this enzyme counteracts the toxicity associated with the formation of D-aminoacyl-tRNA entities in vivo and helps enforce protein L-homochirality. The chain is D-aminoacyl-tRNA deacylase from Salmonella choleraesuis (strain SC-B67).